The sequence spans 90 residues: Putative septation protein SpoVG (90 aa).

It belongs to the SpoVG family.

In terms of biological role, could be involved in septation. In Clostridium perfringens (strain SM101 / Type A), this protein is Putative septation protein SpoVG.